The chain runs to 562 residues: Potassium voltage-gated channel subfamily V member 2 (562 aa).

The segment covering 1–10 (MLKQSNERRW) has biased composition (basic and acidic residues). The interval 1 to 34 (MLKQSNERRWSLSYKPWSTPETEDVPNTGSNQHR) is disordered. Residues 1–163 (MLKQSNERRW…TDEYFFDRDP (163 aa)) are Cytoplasmic-facing. The chain crosses the membrane as a helical span at residues 164-184 (AVFQLIYNFYTSGVLLVRDEL). At 185-269 (CPRSFLEELG…KPFSSVAAKA (85 aa)) the chain is on the extracellular side. The chain crosses the membrane as a helical span at residues 270 to 290 (MGVATNLFVLISVVALALNTV). The Cytoplasmic segment spans residues 291–344 (EEMQHQAEQGTGGGDPRPILEHVEMLCVAFFTLEFLLRLASTPNLQRFARSALN). The helical transmembrane segment at 345 to 365 (LVDLVAILPFYLQLLLECFTS) threads the bilayer. At 366-391 (EDQRHNKDSPREHDLETVGRVGKVGQ) the chain is on the extracellular side. Residues 392–412 (VLRIMRLMRIFRILKLARHST) form a helical; Voltage-sensor membrane-spanning segment. The Cytoplasmic segment spans residues 413-427 (GLRAFGFTLRQCYQQ). A helical transmembrane segment spans residues 428–448 (VGCLMLFITMGIFSFSAAVYS). The Extracellular portion of the chain corresponds to 449-461 (VEHDVPGTNFTSI). Asparagine 457 carries N-linked (GlcNAc...) asparagine glycosylation. An intramembrane region (pore-forming) is located at residues 462 to 482 (LHAWWWAAVSISTVGYGDMYP). The Selectivity filter motif lies at 474–479 (TVGYGD). Residues 483–488 (ETHLGR) lie on the Extracellular side of the membrane. A helical membrane pass occupies residues 489-509 (LFAFLCIAFGIILNGMPISIL). At 510–562 (YNKFSDYYSKLKAYEYTAIRRERGKVNFMQRATKKMAECLSESHAQSTTRQEN) the chain is on the cytoplasmic side.

The protein belongs to the potassium channel family. V (TC 1.A.1.2) subfamily. Kv8.2/KCNV2 sub-subfamily. Heteromultimer with KCNB1, KCNC1 and KCNF1. Does not form homomultimers.

The protein localises to the cell membrane. Its function is as follows. Potassium channel subunit. Modulates channel activity by shifting the threshold and the half-maximal activation to more negative values. The protein is Potassium voltage-gated channel subfamily V member 2 (Kcnv2) of Mus musculus (Mouse).